The following is a 157-amino-acid chain: 2-C-methyl-D-erythritol 2,4-cyclodiphosphate synthase (157 aa).

Residues aspartate 9 and histidine 11 each coordinate a divalent metal cation. Residues 9–11 (DVH) and 35–36 (HS) contribute to the 4-CDP-2-C-methyl-D-erythritol 2-phosphate site. Histidine 43 contributes to the a divalent metal cation binding site. 4-CDP-2-C-methyl-D-erythritol 2-phosphate contacts are provided by residues 57–59 (DIG), phenylalanine 140, and arginine 143.

This sequence belongs to the IspF family. Homotrimer. A divalent metal cation is required as a cofactor.

The catalysed reaction is 4-CDP-2-C-methyl-D-erythritol 2-phosphate = 2-C-methyl-D-erythritol 2,4-cyclic diphosphate + CMP. The protein operates within isoprenoid biosynthesis; isopentenyl diphosphate biosynthesis via DXP pathway; isopentenyl diphosphate from 1-deoxy-D-xylulose 5-phosphate: step 4/6. Functionally, involved in the biosynthesis of isopentenyl diphosphate (IPP) and dimethylallyl diphosphate (DMAPP), two major building blocks of isoprenoid compounds. Catalyzes the conversion of 4-diphosphocytidyl-2-C-methyl-D-erythritol 2-phosphate (CDP-ME2P) to 2-C-methyl-D-erythritol 2,4-cyclodiphosphate (ME-CPP) with a corresponding release of cytidine 5-monophosphate (CMP). This Caldicellulosiruptor bescii (strain ATCC BAA-1888 / DSM 6725 / KCTC 15123 / Z-1320) (Anaerocellum thermophilum) protein is 2-C-methyl-D-erythritol 2,4-cyclodiphosphate synthase.